A 193-amino-acid polypeptide reads, in one-letter code: ATP synthase subunit b (193 aa).

The chain crosses the membrane as a helical span at residues 35–55; sequence IPMMLATFIAFVIVFLLLFFF.

It belongs to the ATPase B chain family. In terms of assembly, F-type ATPases have 2 components, F(1) - the catalytic core - and F(0) - the membrane proton channel. F(1) has five subunits: alpha(3), beta(3), gamma(1), delta(1), epsilon(1). F(0) has three main subunits: a(1), b(2) and c(10-14). The alpha and beta chains form an alternating ring which encloses part of the gamma chain. F(1) is attached to F(0) by a central stalk formed by the gamma and epsilon chains, while a peripheral stalk is formed by the delta and b chains.

The protein localises to the cell membrane. Functionally, f(1)F(0) ATP synthase produces ATP from ADP in the presence of a proton or sodium gradient. F-type ATPases consist of two structural domains, F(1) containing the extramembraneous catalytic core and F(0) containing the membrane proton channel, linked together by a central stalk and a peripheral stalk. During catalysis, ATP synthesis in the catalytic domain of F(1) is coupled via a rotary mechanism of the central stalk subunits to proton translocation. Component of the F(0) channel, it forms part of the peripheral stalk, linking F(1) to F(0). This Mycoplasmopsis synoviae (strain 53) (Mycoplasma synoviae) protein is ATP synthase subunit b.